A 131-amino-acid chain; its full sequence is Small ribosomal subunit protein uS8 (131 aa).

Belongs to the universal ribosomal protein uS8 family. In terms of assembly, part of the 30S ribosomal subunit. Contacts proteins S5 and S12.

One of the primary rRNA binding proteins, it binds directly to 16S rRNA central domain where it helps coordinate assembly of the platform of the 30S subunit. In Desulforudis audaxviator (strain MP104C), this protein is Small ribosomal subunit protein uS8.